Consider the following 151-residue polypeptide: VATPAMPSMTDAQVAAVKGDWEKIKGSGVEILYFFLNKFPGNFPMFKKLGNDLAAAKGTAEFKDQADKIIAFLQGVIEKLGSDMGGAKALLNQLGTSHKAMGITKDQFDQFRQALTELLGNLGFGGNIGAWNATVDLMFHVIFNALDGTPV.

Positions 8–147 constitute a Globin domain; that stretch reads SMTDAQVAAV…MFHVIFNALD (140 aa). Position 98 (His98) interacts with heme b.

Belongs to the globin family. As to quaternary structure, monomer.

This Chironomus thummi thummi (Midge) protein is Globin CTT-IIIA.